The primary structure comprises 235 residues: Large ribosomal subunit protein uL1c (235 aa).

Belongs to the universal ribosomal protein uL1 family. As to quaternary structure, part of the 50S ribosomal subunit.

Its subcellular location is the plastid. It localises to the chloroplast. Its function is as follows. Binds directly to 23S rRNA. Might be involved in E site tRNA release (Potential). The protein is Large ribosomal subunit protein uL1c (rpl1) of Gracilaria tenuistipitata var. liui (Red alga).